We begin with the raw amino-acid sequence, 355 residues long: UDP-N-acetylglucosamine--N-acetylmuramyl-(pentapeptide) pyrophosphoryl-undecaprenol N-acetylglucosamine transferase (355 aa).

UDP-N-acetyl-alpha-D-glucosamine is bound by residues 15–17, asparagine 127, arginine 163, serine 191, isoleucine 244, 263–268, and glutamine 288; these read TGG and ALTVSE.

This sequence belongs to the glycosyltransferase 28 family. MurG subfamily.

It localises to the cell inner membrane. It carries out the reaction di-trans,octa-cis-undecaprenyl diphospho-N-acetyl-alpha-D-muramoyl-L-alanyl-D-glutamyl-meso-2,6-diaminopimeloyl-D-alanyl-D-alanine + UDP-N-acetyl-alpha-D-glucosamine = di-trans,octa-cis-undecaprenyl diphospho-[N-acetyl-alpha-D-glucosaminyl-(1-&gt;4)]-N-acetyl-alpha-D-muramoyl-L-alanyl-D-glutamyl-meso-2,6-diaminopimeloyl-D-alanyl-D-alanine + UDP + H(+). It functions in the pathway cell wall biogenesis; peptidoglycan biosynthesis. Cell wall formation. Catalyzes the transfer of a GlcNAc subunit on undecaprenyl-pyrophosphoryl-MurNAc-pentapeptide (lipid intermediate I) to form undecaprenyl-pyrophosphoryl-MurNAc-(pentapeptide)GlcNAc (lipid intermediate II). This is UDP-N-acetylglucosamine--N-acetylmuramyl-(pentapeptide) pyrophosphoryl-undecaprenol N-acetylglucosamine transferase from Salmonella paratyphi B (strain ATCC BAA-1250 / SPB7).